The sequence spans 195 residues: Molybdenum cofactor guanylyltransferase (195 aa).

GTP-binding positions include 12 to 14 (LAG), lysine 25, asparagine 53, aspartate 70, and aspartate 100. Aspartate 100 provides a ligand contact to Mg(2+).

This sequence belongs to the MobA family. In terms of assembly, monomer. It depends on Mg(2+) as a cofactor.

It is found in the cytoplasm. The catalysed reaction is Mo-molybdopterin + GTP + H(+) = Mo-molybdopterin guanine dinucleotide + diphosphate. In terms of biological role, transfers a GMP moiety from GTP to Mo-molybdopterin (Mo-MPT) cofactor (Moco or molybdenum cofactor) to form Mo-molybdopterin guanine dinucleotide (Mo-MGD) cofactor. In Vibrio parahaemolyticus serotype O3:K6 (strain RIMD 2210633), this protein is Molybdenum cofactor guanylyltransferase.